Reading from the N-terminus, the 437-residue chain is Beta-1,3-galactosyl-O-glycosyl-glycoprotein beta-1,6-N-acetylglucosaminyltransferase 3 (437 aa).

Residues 1–12 (MTSWQRLCWHYR) are Cytoplasmic-facing. A helical; Signal-anchor for type II membrane protein transmembrane segment spans residues 13–30 (LWTLGCYMLLAILALKLS). Over 31 to 437 (LRLKCDFDAM…RHKAIYGTEL (407 aa)) the chain is Lumenal. 4 cysteine pairs are disulfide-bonded: Cys70/Cys227, Cys161/Cys381, Cys182/Cys209, and Cys390/Cys422. Asn288 carries an N-linked (GlcNAc...) asparagine glycan.

It belongs to the glycosyltransferase 14 family. N-glycosylated.

It is found in the golgi apparatus membrane. It carries out the reaction a 3-O-[beta-D-galactosyl-(1-&gt;3)-N-acetyl-alpha-D-galactosaminyl]-L-seryl-[protein] + UDP-N-acetyl-alpha-D-glucosamine = 3-O-{beta-D-galactosyl-(1-&gt;3)-[N-acetyl-beta-D-glucosaminyl-(1-&gt;6)]-N-acetyl-alpha-D-galactosaminyl}-L-seryl-[protein] + UDP + H(+). The enzyme catalyses a 3-O-[beta-D-galactosyl-(1-&gt;3)-N-acetyl-alpha-D-galactosaminyl]-L-threonyl-[protein] + UDP-N-acetyl-alpha-D-glucosamine = a 3-O-{beta-D-galactosyl-(1-&gt;3)-[N-acetyl-beta-D-glucosaminyl-(1-&gt;6)]-N-acetyl-alpha-D-galactosaminyl}-L-threonyl-[protein] + UDP + H(+). It catalyses the reaction a beta-D-Gal-(1-&gt;4)-beta-D-GlcNAc-(1-&gt;3)-beta-D-Gal-(1-&gt;4)-beta-D-GlcNAc derivative + UDP-N-acetyl-alpha-D-glucosamine = a beta-D-Gal-(1-&gt;4)-beta-D-GlcNAc-(1-&gt;3)-[beta-D-GlcNAc-(1-&gt;6)]-beta-D-Gal-(1-&gt;4)-N-acetyl-beta-D-glucosaminyl derivative + UDP + H(+). The catalysed reaction is 3-O-[N-acetyl-beta-D-glucosaminyl-(1-&gt;3)-N-acetyl-alpha-D-galactosaminyl]-L-seryl-[protein] + UDP-N-acetyl-alpha-D-glucosamine = 3-O-[N-acetyl-beta-D-glucosaminyl-(1-&gt;3)-[N-acetyl-beta-D-glucosaminyl-(1-&gt;6)]-N-acetyl-alpha-D-galactosaminyl]-L-seryl-[protein] + UDP + H(+). It carries out the reaction a 3-O-[N-acetyl-beta-D-glucosaminyl-(1-&gt;3)-N-acetyl-alpha-D-galactosaminyl]-L-threonyl-[protein] + UDP-N-acetyl-alpha-D-glucosamine = 3-O-[N-acetyl-beta-D-glucosaminyl-(1-&gt;3)-[N-acetyl-beta-D-glucosaminyl-(1-&gt;6)]-N-acetyl-alpha-D-galactosaminyl]-L-threonyl-[protein] + UDP + H(+). It functions in the pathway protein modification; protein glycosylation. Its function is as follows. Glycosyltransferase that can synthesize all known mucin beta 6 N-acetylglucosaminides. Mediates core 2 and core 4 O-glycan branching, 2 important steps in mucin-type biosynthesis. Also has I-branching enzyme activity by converting linear into branched poly-N-acetyllactosaminoglycans, leading to introduce the blood group I antigen during embryonic development. The sequence is that of Beta-1,3-galactosyl-O-glycosyl-glycoprotein beta-1,6-N-acetylglucosaminyltransferase 3 (Gcnt3) from Mus musculus (Mouse).